The chain runs to 505 residues: Salutaridine synthase (505 aa).

A helical membrane pass occupies residues 10-30; sequence DFWMIACTVIIVFALVKFMFS. Cys444 lines the heme pocket.

The protein belongs to the cytochrome P450 family. Requires heme as cofactor.

The protein resides in the endoplasmic reticulum membrane. The catalysed reaction is (R)-reticuline + reduced [NADPH--hemoprotein reductase] + O2 = salutaridine + oxidized [NADPH--hemoprotein reductase] + 2 H2O + H(+). In terms of biological role, cytochrome P450 monooxygenase involved in biosynthesis of morphinan-type benzylisoquinoline and opiate alkaloids natural products. Catalyzes the formation of the morphinan alkaloid salutaridine by intramolecular phenol oxidation of (R)-reticuline without the incorporation of oxygen into the product. Can also use (R)-norreticuline as substrate. The chain is Salutaridine synthase from Papaver somniferum (Opium poppy).